The following is a 143-amino-acid chain: Ribosome-binding factor A (143 aa).

The span at 116–128 (SDDEAKQKQHGDQ) shows a compositional bias: basic and acidic residues. The segment at 116-143 (SDDEAKQKQHGDQQDVSQSSDDKSEGED) is disordered.

Belongs to the RbfA family. Monomer. Binds 30S ribosomal subunits, but not 50S ribosomal subunits or 70S ribosomes.

The protein resides in the cytoplasm. One of several proteins that assist in the late maturation steps of the functional core of the 30S ribosomal subunit. Associates with free 30S ribosomal subunits (but not with 30S subunits that are part of 70S ribosomes or polysomes). Required for efficient processing of 16S rRNA. May interact with the 5'-terminal helix region of 16S rRNA. The sequence is that of Ribosome-binding factor A from Shewanella sediminis (strain HAW-EB3).